A 449-amino-acid polypeptide reads, in one-letter code: uncharacterized protein (449 aa).

At Ser-420 the chain carries Phosphoserine.

Belongs to the NAD kinase family.

Its subcellular location is the cytoplasm. It localises to the nucleus. This is an uncharacterized protein from Schizosaccharomyces pombe (strain 972 / ATCC 24843) (Fission yeast).